The primary structure comprises 389 residues: Tubulin-like protein CetZ3 (389 aa).

GTP contacts are provided by residues 10-14, 110-112, E142, N169, and N187; these read QAGGK and GTG.

It belongs to the CetZ family.

The protein resides in the cytoplasm. Its function is as follows. Involved in cell shape control. The protein is Tubulin-like protein CetZ3 of Haloferax volcanii (strain ATCC 29605 / DSM 3757 / JCM 8879 / NBRC 14742 / NCIMB 2012 / VKM B-1768 / DS2) (Halobacterium volcanii).